Consider the following 553-residue polypeptide: uncharacterized protein (553 aa).

This is an uncharacterized protein from Rickettsia prowazekii (strain Madrid E).